The following is a 224-amino-acid chain: Cytidylate kinase (224 aa).

13–21 (GPSASGKGT) lines the ATP pocket.

This sequence belongs to the cytidylate kinase family. Type 1 subfamily.

The protein resides in the cytoplasm. The enzyme catalyses CMP + ATP = CDP + ADP. It catalyses the reaction dCMP + ATP = dCDP + ADP. The protein is Cytidylate kinase of Nitrosomonas eutropha (strain DSM 101675 / C91 / Nm57).